Consider the following 265-residue polypeptide: Indole-3-glycerol phosphate synthase (265 aa).

This sequence belongs to the TrpC family.

It carries out the reaction 1-(2-carboxyphenylamino)-1-deoxy-D-ribulose 5-phosphate + H(+) = (1S,2R)-1-C-(indol-3-yl)glycerol 3-phosphate + CO2 + H2O. Its pathway is amino-acid biosynthesis; L-tryptophan biosynthesis; L-tryptophan from chorismate: step 4/5. This Desulforamulus reducens (strain ATCC BAA-1160 / DSM 100696 / MI-1) (Desulfotomaculum reducens) protein is Indole-3-glycerol phosphate synthase.